The primary structure comprises 66 residues: MASKIFFVLAVFLVMSAVLPESFAGCKKLNSNCSRQYRECCHGLVCRRPNYGNGRGILWRCVKAKK.

The signal sequence occupies residues 1–24 (MASKIFFVLAVFLVMSAVLPESFA). Intrachain disulfides connect cysteine 26–cysteine 41, cysteine 33–cysteine 46, and cysteine 40–cysteine 61.

It is found in the secreted. It localises to the nematocyst. Its function is as follows. Alpha-toxins act on postsynaptic membranes, they bind to the nicotinic acetylcholine receptors (nAChR) and thus inhibit them. This toxin competes with alpha-bungarotoxin for binding to orthosteric sites on muscle-type T.carlifornicus (IC(50)=408 nM) and human alpha-7/CHRNA7 nAChRs (IC(50)=14.16 uM). This chain is Alpha-actitoxin-Ms11a-1, found in Metridium senile (Brown sea anemone).